The sequence spans 127 residues: Glycine cleavage system H protein (127 aa).

One can recognise a Lipoyl-binding domain in the interval 22 to 104 (KVRIGITDFA…YEKAWMIVVE (83 aa)). K63 carries the post-translational modification N6-lipoyllysine.

The protein belongs to the GcvH family. As to quaternary structure, the glycine cleavage system is composed of four proteins: P, T, L and H. The cofactor is (R)-lipoate.

Its function is as follows. The glycine cleavage system catalyzes the degradation of glycine. The H protein shuttles the methylamine group of glycine from the P protein to the T protein. Functionally, is also involved in protein lipoylation via its role as an octanoyl/lipoyl carrier protein intermediate. This Geobacillus sp. (strain WCH70) protein is Glycine cleavage system H protein.